Here is a 74-residue protein sequence, read N- to C-terminus: Mitochondrial import receptor subunit TOM6 homolog (74 aa).

Positions 1-16 (MASSTVPVSAAGSANE) are enriched in polar residues. Residues 1 to 22 (MASSTVPVSAAGSANETPEIPD) form a disordered region. Ala-2 bears the N-acetylalanine mark.

The protein belongs to the Tom6 family. As to quaternary structure, forms part of the preprotein translocase complex of the outer mitochondrial membrane (TOM complex) which consists of at least 7 different proteins (TOMM5, TOMM6, TOMM7, TOMM20, TOMM22, TOMM40 and TOMM70).

It is found in the mitochondrion outer membrane. This is Mitochondrial import receptor subunit TOM6 homolog (TOMM6) from Homo sapiens (Human).